We begin with the raw amino-acid sequence, 252 residues long: Trans-aconitate 2-methyltransferase (252 aa).

The protein belongs to the methyltransferase superfamily. Tam family.

It localises to the cytoplasm. The catalysed reaction is trans-aconitate + S-adenosyl-L-methionine = (E)-3-(methoxycarbonyl)pent-2-enedioate + S-adenosyl-L-homocysteine. Catalyzes the S-adenosylmethionine monomethyl esterification of trans-aconitate. The sequence is that of Trans-aconitate 2-methyltransferase from Escherichia coli (strain UTI89 / UPEC).